Consider the following 258-residue polypeptide: Imidazole glycerol phosphate synthase subunit HisF (258 aa).

Catalysis depends on residues Asp11 and Asp130.

It belongs to the HisA/HisF family. In terms of assembly, heterodimer of HisH and HisF.

It localises to the cytoplasm. The catalysed reaction is 5-[(5-phospho-1-deoxy-D-ribulos-1-ylimino)methylamino]-1-(5-phospho-beta-D-ribosyl)imidazole-4-carboxamide + L-glutamine = D-erythro-1-(imidazol-4-yl)glycerol 3-phosphate + 5-amino-1-(5-phospho-beta-D-ribosyl)imidazole-4-carboxamide + L-glutamate + H(+). It participates in amino-acid biosynthesis; L-histidine biosynthesis; L-histidine from 5-phospho-alpha-D-ribose 1-diphosphate: step 5/9. Functionally, IGPS catalyzes the conversion of PRFAR and glutamine to IGP, AICAR and glutamate. The HisF subunit catalyzes the cyclization activity that produces IGP and AICAR from PRFAR using the ammonia provided by the HisH subunit. This is Imidazole glycerol phosphate synthase subunit HisF from Methylorubrum extorquens (strain PA1) (Methylobacterium extorquens).